The primary structure comprises 303 residues: Nitrogenase iron protein (303 aa).

11 to 18 (GKGGIGKS) serves as a coordination point for ATP. Position 112 (cysteine 112) interacts with [4Fe-4S] cluster. At arginine 115 the chain carries ADP-ribosylarginine; by dinitrogenase reductase ADP-ribosyltransferase. Cysteine 147 serves as a coordination point for [4Fe-4S] cluster.

This sequence belongs to the NifH/BchL/ChlL family. As to quaternary structure, homodimer. The cofactor is [4Fe-4S] cluster. The reversible ADP-ribosylation of Arg-115 inactivates the nitrogenase reductase and regulates nitrogenase activity.

The catalysed reaction is N2 + 8 reduced [2Fe-2S]-[ferredoxin] + 16 ATP + 16 H2O = H2 + 8 oxidized [2Fe-2S]-[ferredoxin] + 2 NH4(+) + 16 ADP + 16 phosphate + 6 H(+). Functionally, the key enzymatic reactions in nitrogen fixation are catalyzed by the nitrogenase complex, which has 2 components: the iron protein and the molybdenum-iron protein. This is Nitrogenase iron protein from Wolinella succinogenes (strain ATCC 29543 / DSM 1740 / CCUG 13145 / JCM 31913 / LMG 7466 / NCTC 11488 / FDC 602W) (Vibrio succinogenes).